Here is a 74-residue protein sequence, read N- to C-terminus: Conotoxin ArMKLT2-041 (74 aa).

The first 22 residues, 1–22 (MKLTCVLIVAVLFLTACQLIAA), serve as a signal peptide directing secretion. Residues 23 to 46 (DDSRDLQKFPRRKMRDGMLNTKNT) constitute a propeptide that is removed on maturation. Pyrrolidone carboxylic acid is present on Gln-49. Cystine bridges form between Cys-50–Cys-65, Cys-57–Cys-68, and Cys-64–Cys-73.

The protein belongs to the conotoxin O1 superfamily. Expressed by the venom duct.

Its subcellular location is the secreted. The sequence is that of Conotoxin ArMKLT2-041 from Conus arenatus (Sand-dusted cone).